A 476-amino-acid chain; its full sequence is Serine--tRNA ligase (476 aa).

280–282 is a binding site for L-serine; the sequence is TAE. Residue 311-313 participates in ATP binding; that stretch reads RAE. Glu334 is an L-serine binding site. Residue 401-404 coordinates ATP; sequence EISS. Ser436 serves as a coordination point for L-serine.

This sequence belongs to the class-II aminoacyl-tRNA synthetase family. Type-1 seryl-tRNA synthetase subfamily. In terms of assembly, homodimer. The tRNA molecule binds across the dimer.

It localises to the cytoplasm. It catalyses the reaction tRNA(Ser) + L-serine + ATP = L-seryl-tRNA(Ser) + AMP + diphosphate + H(+). The enzyme catalyses tRNA(Sec) + L-serine + ATP = L-seryl-tRNA(Sec) + AMP + diphosphate + H(+). The protein operates within aminoacyl-tRNA biosynthesis; selenocysteinyl-tRNA(Sec) biosynthesis; L-seryl-tRNA(Sec) from L-serine and tRNA(Sec): step 1/1. In terms of biological role, catalyzes the attachment of serine to tRNA(Ser). Is also able to aminoacylate tRNA(Sec) with serine, to form the misacylated tRNA L-seryl-tRNA(Sec), which will be further converted into selenocysteinyl-tRNA(Sec). In Rhodopseudomonas palustris (strain HaA2), this protein is Serine--tRNA ligase.